Reading from the N-terminus, the 1298-residue chain is Phosphoribosylformylglycinamidine synthase (1298 aa).

Positions 303–327 (FPGAATGSGGEIRDEGATGRGAKPK) are disordered. Residues 305–316 (GAATGSGGEIRD), 384–386 (TGY), and A676 contribute to the ATP site. D677, E716, N720, and D884 together coordinate Mg(2+). S886 is a binding site for ATP. The region spanning 1045–1298 (VAVLREQGVN…MFRNARAWVN (254 aa)) is the Glutamine amidotransferase type-1 domain. Catalysis depends on C1138, which acts as the Nucleophile. Catalysis depends on residues H1263 and E1265.

This sequence in the N-terminal section; belongs to the FGAMS family. Monomer.

The protein resides in the cytoplasm. It catalyses the reaction N(2)-formyl-N(1)-(5-phospho-beta-D-ribosyl)glycinamide + L-glutamine + ATP + H2O = 2-formamido-N(1)-(5-O-phospho-beta-D-ribosyl)acetamidine + L-glutamate + ADP + phosphate + H(+). The protein operates within purine metabolism; IMP biosynthesis via de novo pathway; 5-amino-1-(5-phospho-D-ribosyl)imidazole from N(2)-formyl-N(1)-(5-phospho-D-ribosyl)glycinamide: step 1/2. Phosphoribosylformylglycinamidine synthase involved in the purines biosynthetic pathway. Catalyzes the ATP-dependent conversion of formylglycinamide ribonucleotide (FGAR) and glutamine to yield formylglycinamidine ribonucleotide (FGAM) and glutamate. In Pseudomonas savastanoi pv. phaseolicola (strain 1448A / Race 6) (Pseudomonas syringae pv. phaseolicola (strain 1448A / Race 6)), this protein is Phosphoribosylformylglycinamidine synthase.